We begin with the raw amino-acid sequence, 356 residues long: Cobalt-precorrin-5B C(1)-methyltransferase (356 aa).

It belongs to the CbiD family.

The catalysed reaction is Co-precorrin-5B + S-adenosyl-L-methionine = Co-precorrin-6A + S-adenosyl-L-homocysteine. The protein operates within cofactor biosynthesis; adenosylcobalamin biosynthesis; cob(II)yrinate a,c-diamide from sirohydrochlorin (anaerobic route): step 6/10. Catalyzes the methylation of C-1 in cobalt-precorrin-5B to form cobalt-precorrin-6A. In Citrifermentans bemidjiense (strain ATCC BAA-1014 / DSM 16622 / JCM 12645 / Bem) (Geobacter bemidjiensis), this protein is Cobalt-precorrin-5B C(1)-methyltransferase.